We begin with the raw amino-acid sequence, 346 residues long: MSTANHFQRILEKLSISDNERAVYTKEAEEIQNYVVDELKRVDKTFRQVFDGLSLGGSYLDRVKLNLPDEFDLHMKLKFPFDIRPTRIDQGFIYLEADLTVINPQRIHRIVLQDWLRNAFRKVFRSNQTIATTSNRVYKLTYTLEGYGCAHTILAVCGSRSISFDLVPAFEFSGSQWPFDICPVPADVSNNWPWFAIPQQKKKSAKPRTTFMVCAPHWEREIMKGKDNLKNVLRLMKGLRDAHARKLPHLSSYMLKTVLLHRLESADWERDLGTLLVEMWSHLVDHLRARRLEFFLAKDHNVFNRMNQNEIKICLENASTLLRKLCIAQTCGGSYHHVAQLFNIPN.

ATP is bound by residues S58 and 70-72 (EFD). Positions 70, 72, and 165 each coordinate Mg(2+). Residues D165 and 212 to 219 (MVCAPHWE) contribute to the GTP site. ATP is bound by residues 216–219 (PHWE), K237, and 252–256 (SYMLK).

It belongs to the mab-21 family. Requires Mg(2+) as cofactor. Mn(2+) is required as a cofactor.

Its activity is regulated as follows. Activated in response of some unknown stimulus. Not activated in response to L-monocytogenes infection. Its function is as follows. Probable nucleotidyltransferase that catalyzes the formation of cyclic dinucleotide second messenger in response to some unknown stimulus. Does not catalyze the formation of cyclic GMP-AMP from ATP and GTP. In Drosophila melanogaster (Fruit fly), this protein is Cyclic GMP-AMP synthase-like protein.